A 65-amino-acid polypeptide reads, in one-letter code: Putative beta-neurotoxin RjAa8 (65 aa).

Residues 1–64 (KEGYPMGRDG…VWDSSTNKCG (64 aa)) form the LCN-type CS-alpha/beta domain. 4 disulfide bridges follow: cysteine 11/cysteine 63, cysteine 15/cysteine 37, cysteine 22/cysteine 44, and cysteine 26/cysteine 46.

This sequence belongs to the long (4 C-C) scorpion toxin superfamily. Sodium channel inhibitor family. Beta subfamily. In terms of tissue distribution, expressed by the venom gland.

The protein resides in the secreted. Functionally, beta toxins bind voltage-independently at site-4 of sodium channels (Nav) and shift the voltage of activation toward more negative potentials thereby affecting sodium channel activation and promoting spontaneous and repetitive firing. This Rhopalurus junceus (Caribbean blue scorpion) protein is Putative beta-neurotoxin RjAa8.